Reading from the N-terminus, the 268-residue chain is Taurine import ATP-binding protein TauB (268 aa).

The region spanning 4–236 is the ABC transporter domain; it reads LSINNLSMRF…LGVDSDLREV (233 aa). ATP is bound at residue 41 to 48; sequence GPSGCGKT.

This sequence belongs to the ABC transporter superfamily. Taurine importer (TC 3.A.1.17.1) family. The complex is composed of two ATP-binding proteins (TauB), two transmembrane proteins (TauC) and a solute-binding protein (TauA).

It localises to the cell inner membrane. The catalysed reaction is taurine(out) + ATP + H2O = taurine(in) + ADP + phosphate + H(+). Functionally, part of the ABC transporter complex TauABC involved in taurine import. Responsible for energy coupling to the transport system. The protein is Taurine import ATP-binding protein TauB of Roseobacter denitrificans (strain ATCC 33942 / OCh 114) (Erythrobacter sp. (strain OCh 114)).